Reading from the N-terminus, the 354-residue chain is Ornithine carbamoyltransferase, catabolic (354 aa).

Carbamoyl phosphate-binding positions include 67-70 (STRT), glutamine 94, arginine 118, and 145-148 (HPTQ). L-ornithine-binding positions include asparagine 177, aspartate 241, and 245–246 (SM). Carbamoyl phosphate-binding positions include 284 to 285 (CL) and arginine 329.

The protein belongs to the aspartate/ornithine carbamoyltransferase superfamily. OTCase family.

It localises to the cytoplasm. The catalysed reaction is carbamoyl phosphate + L-ornithine = L-citrulline + phosphate + H(+). It functions in the pathway amino-acid degradation; L-arginine degradation via ADI pathway; carbamoyl phosphate from L-arginine: step 2/2. In terms of biological role, reversibly catalyzes the transfer of the carbamoyl group from carbamoyl phosphate (CP) to the N(epsilon) atom of ornithine (ORN) to produce L-citrulline. The chain is Ornithine carbamoyltransferase, catabolic (arcB) from Lactococcus lactis subsp. cremoris (Streptococcus cremoris).